Here is a 245-residue protein sequence, read N- to C-terminus: 1-(5-phosphoribosyl)-5-[(5-phosphoribosylamino)methylideneamino] imidazole-4-carboxamide isomerase (245 aa).

The active-site Proton acceptor is aspartate 7. Aspartate 129 functions as the Proton donor in the catalytic mechanism.

The protein belongs to the HisA/HisF family.

It is found in the cytoplasm. The catalysed reaction is 1-(5-phospho-beta-D-ribosyl)-5-[(5-phospho-beta-D-ribosylamino)methylideneamino]imidazole-4-carboxamide = 5-[(5-phospho-1-deoxy-D-ribulos-1-ylimino)methylamino]-1-(5-phospho-beta-D-ribosyl)imidazole-4-carboxamide. The protein operates within amino-acid biosynthesis; L-histidine biosynthesis; L-histidine from 5-phospho-alpha-D-ribose 1-diphosphate: step 4/9. The polypeptide is 1-(5-phosphoribosyl)-5-[(5-phosphoribosylamino)methylideneamino] imidazole-4-carboxamide isomerase (Idiomarina loihiensis (strain ATCC BAA-735 / DSM 15497 / L2-TR)).